We begin with the raw amino-acid sequence, 137 residues long: Nucleoside diphosphate kinase (137 aa).

Lys9, Phe57, Arg85, Thr91, Arg102, and Asn112 together coordinate ATP. Residue His115 is the Pros-phosphohistidine intermediate of the active site.

Belongs to the NDK family. Homotetramer. The cofactor is Mg(2+).

It localises to the cytoplasm. It carries out the reaction a 2'-deoxyribonucleoside 5'-diphosphate + ATP = a 2'-deoxyribonucleoside 5'-triphosphate + ADP. The catalysed reaction is a ribonucleoside 5'-diphosphate + ATP = a ribonucleoside 5'-triphosphate + ADP. Its function is as follows. Major role in the synthesis of nucleoside triphosphates other than ATP. The ATP gamma phosphate is transferred to the NDP beta phosphate via a ping-pong mechanism, using a phosphorylated active-site intermediate. The sequence is that of Nucleoside diphosphate kinase from Campylobacter fetus subsp. fetus (strain 82-40).